An 801-amino-acid chain; its full sequence is Na(+)/H(+) antiporter subunit A1 (801 aa).

A run of 20 helical transmembrane segments spans residues 1-21, 30-50, 79-99, 117-137, 166-186, 206-226, 228-250, 265-285, 300-320, 337-357, 373-393, 427-447, 472-492, 522-542, 591-611, 623-643, 646-666, 671-691, 707-727, and 764-784; these read MSLLHIAVLLPLIFALIIPFL, LGWFVLPVPIVLFIYFISLIS, LGLLFSLLITGIGSLVVLYSI, LFMGAMLGVVLSDNFIILYLF, LIITVLGGLSMLGGIILLSLA, PFFILVMILFMIGAFTKSAQV, FYIWLPDAMEAPTPVSAYLHSAT, IFAISEGWVWTITLVGLITLF, ILAFSTVSQLGMIMSMLGIGA, FVAAIFHLINHATFKGALFMI, LGGLLTIMPISFTLTVITTLS, LGILLPIIAIIGSIFTFVYSI, ILMLISPIILTSLVIVFGLFP, GITPAFLSTIGIYIIGILLLI, LVIILGILIALTFVTVISVPF, VFEGATVLFLLIASTFIIFAK, LFSIIMLSAVGYAISVLFIFF, LALTQFVVESISTALFLLCFY, LTNAVISIGVGLSVIILGLIG, and MDTLFESSVLGIAGLGVYTMI.

This sequence belongs to the CPA3 antiporters (TC 2.A.63) subunit A family. As to quaternary structure, may form a heterooligomeric complex that consists of seven subunits: mnhA1, mnhB1, mnhC1, mnhD1, mnhE1, mnhF1 and mnhG1.

The protein resides in the cell membrane. Mnh complex is a Na(+)/H(+) antiporter involved in Na(+) excretion. This chain is Na(+)/H(+) antiporter subunit A1 (mnhA1), found in Staphylococcus epidermidis (strain ATCC 35984 / DSM 28319 / BCRC 17069 / CCUG 31568 / BM 3577 / RP62A).